Here is a 332-residue protein sequence, read N- to C-terminus: Methylthioribose-1-phosphate isomerase (332 aa).

Residues 44-46, Arg-87, and Gln-192 contribute to the substrate site; that span reads RGA. The active-site Proton donor is the Asp-233. A substrate-binding site is contributed by 243–244; the sequence is NK.

This sequence belongs to the eIF-2B alpha/beta/delta subunits family. MtnA subfamily.

The enzyme catalyses 5-(methylsulfanyl)-alpha-D-ribose 1-phosphate = 5-(methylsulfanyl)-D-ribulose 1-phosphate. Its pathway is amino-acid biosynthesis; L-methionine biosynthesis via salvage pathway; L-methionine from S-methyl-5-thio-alpha-D-ribose 1-phosphate: step 1/6. Functionally, catalyzes the interconversion of methylthioribose-1-phosphate (MTR-1-P) into methylthioribulose-1-phosphate (MTRu-1-P). The polypeptide is Methylthioribose-1-phosphate isomerase (Dehalococcoides mccartyi (strain ATCC BAA-2100 / JCM 16839 / KCTC 5957 / BAV1)).